Reading from the N-terminus, the 230-residue chain is MRQYTSKSILFMTAIALSACSHLPQTTSQGATVVSAQTVTQALGVDLASLEQKATALKPFEYIHNQDHYIAYLSTQPELIKVQKNGQLAKFFYQAGKVSFVQDKTGVYQFNQSGDVIAAIDANGKKQHANPADSKALWHKASQLQKLFGYNKADASAGRVKTGSDAKVNYLCIAKIQQVAQTNRVFRSPENAVVTENQIKATVRLNGNQYYNMDCQLSGDKVSKLSLMKK.

A signal peptide spans 1–18; sequence MRQYTSKSILFMTAIALS.

This is an uncharacterized protein from Pasteurella multocida (strain Pm70).